The chain runs to 138 residues: Large-conductance mechanosensitive channel (138 aa).

The next 2 membrane-spanning stretches (helical) occupy residues 19–39 (VGVIIGAAFGAIVTSLVGDVI) and 81–101 (GSFLTLTINFIIIAFVLFLVI).

This sequence belongs to the MscL family. As to quaternary structure, homopentamer.

It is found in the cell inner membrane. Its function is as follows. Channel that opens in response to stretch forces in the membrane lipid bilayer. May participate in the regulation of osmotic pressure changes within the cell. The chain is Large-conductance mechanosensitive channel from Bradyrhizobium diazoefficiens (strain JCM 10833 / BCRC 13528 / IAM 13628 / NBRC 14792 / USDA 110).